The chain runs to 475 residues: Ribulose bisphosphate carboxylase large chain (475 aa).

Positions 1 to 2 are excised as a propeptide; sequence MS. At P3 the chain carries N-acetylproline. At K14 the chain carries N6,N6,N6-trimethyllysine. Substrate is bound by residues N123 and T173. The active-site Proton acceptor is the K175. K177 is a substrate binding site. Mg(2+) contacts are provided by K201, D203, and E204. The residue at position 201 (K201) is an N6-carboxylysine. The active-site Proton acceptor is the H294. Substrate is bound by residues R295, H327, and S379.

It belongs to the RuBisCO large chain family. Type I subfamily. In terms of assembly, heterohexadecamer of 8 large chains and 8 small chains; disulfide-linked. The disulfide link is formed within the large subunit homodimers. Mg(2+) is required as a cofactor. In terms of processing, the disulfide bond which can form in the large chain dimeric partners within the hexadecamer appears to be associated with oxidative stress and protein turnover.

The protein localises to the plastid. Its subcellular location is the chloroplast. It catalyses the reaction 2 (2R)-3-phosphoglycerate + 2 H(+) = D-ribulose 1,5-bisphosphate + CO2 + H2O. It carries out the reaction D-ribulose 1,5-bisphosphate + O2 = 2-phosphoglycolate + (2R)-3-phosphoglycerate + 2 H(+). Functionally, ruBisCO catalyzes two reactions: the carboxylation of D-ribulose 1,5-bisphosphate, the primary event in carbon dioxide fixation, as well as the oxidative fragmentation of the pentose substrate in the photorespiration process. Both reactions occur simultaneously and in competition at the same active site. In Keteleeria davidiana (David's keteleeria), this protein is Ribulose bisphosphate carboxylase large chain.